The sequence spans 968 residues: RNA polymerase-associated protein RapA (968 aa).

Residues 164–334 (DVGRRHAPRV…FARLRLLDPN (171 aa)) enclose the Helicase ATP-binding domain. Residue 177 to 184 (DEVGLGKT) coordinates ATP. Positions 280–283 (DEAH) match the DEAH box motif. The region spanning 490-662 (RVEWLMGYLT…YLASPDETEG (173 aa)) is the Helicase C-terminal domain.

This sequence belongs to the SNF2/RAD54 helicase family. RapA subfamily. In terms of assembly, interacts with the RNAP. Has a higher affinity for the core RNAP than for the holoenzyme. Its ATPase activity is stimulated by binding to RNAP.

Transcription regulator that activates transcription by stimulating RNA polymerase (RNAP) recycling in case of stress conditions such as supercoiled DNA or high salt concentrations. Probably acts by releasing the RNAP, when it is trapped or immobilized on tightly supercoiled DNA. Does not activate transcription on linear DNA. Probably not involved in DNA repair. This Escherichia coli O127:H6 (strain E2348/69 / EPEC) protein is RNA polymerase-associated protein RapA.